Reading from the N-terminus, the 281-residue chain is Nuclear receptor-interacting protein 2 (281 aa).

Residues 18 to 85 (ESCSTGQRQA…RAHLSQQRRL (68 aa)) form a disordered region. Positions 36–47 (TPPPSSPWPTPP) are enriched in pro residues. The span at 55–78 (QEARRDEGEARTRGQEAQLRDRAH) shows a compositional bias: basic and acidic residues. Positions 244–248 (LQTLL) match the LXXLL motif motif.

As to quaternary structure, interacts with NR1F2, RARA and THRB in a ligand-dependent manner.

Its subcellular location is the nucleus. Its function is as follows. Down-regulates transcriptional activation by nuclear receptors such as NR1F2. This is Nuclear receptor-interacting protein 2 (NRIP2) from Homo sapiens (Human).